The primary structure comprises 161 residues: MATMSLAAASPLASIPRGIAAQAPCAAFLSIRLGGATATRFAGLAVASQPAERRAAAMVAMAKREQELEEIRAMTTEQMEEEVVDLKGELFLLRLKRSARQEFKNSEFSRMRKRIARMLTVKREREIEQGINKRLSRKLDRKWKQSIVVRPPPSLRGNKEE.

A chloroplast-targeting transit peptide spans 1–61; that stretch reads MATMSLAAAS…ERRAAAMVAM (61 aa).

The protein belongs to the universal ribosomal protein uL29 family. As to quaternary structure, part of the 50S ribosomal subunit.

The protein resides in the plastid. The protein localises to the chloroplast. This Zea mays (Maize) protein is Large ribosomal subunit protein uL29c (RPL29).